A 55-amino-acid chain; its full sequence is ATP synthase F(0) complex subunit 8 (55 aa).

Residues 9 to 29 (WFAIMVFSWFVFLIFLPPKIM) traverse the membrane as a helical segment.

This sequence belongs to the ATPase protein 8 family. Component of the ATP synthase complex composed at least of ATP5F1A/subunit alpha, ATP5F1B/subunit beta, ATP5MC1/subunit c (homooctomer), MT-ATP6/subunit a, MT-ATP8/subunit 8, ATP5ME/subunit e, ATP5MF/subunit f, ATP5MG/subunit g, ATP5MK/subunit k, ATP5MJ/subunit j, ATP5F1C/subunit gamma, ATP5F1D/subunit delta, ATP5F1E/subunit epsilon, ATP5PF/subunit F6, ATP5PB/subunit b, ATP5PD/subunit d, ATP5PO/subunit OSCP. ATP synthase complex consists of a soluble F(1) head domain (subunits alpha(3) and beta(3)) - the catalytic core - and a membrane F(0) domain - the membrane proton channel (subunits c, a, 8, e, f, g, k and j). These two domains are linked by a central stalk (subunits gamma, delta, and epsilon) rotating inside the F1 region and a stationary peripheral stalk (subunits F6, b, d, and OSCP).

It localises to the mitochondrion membrane. Subunit 8, of the mitochondrial membrane ATP synthase complex (F(1)F(0) ATP synthase or Complex V) that produces ATP from ADP in the presence of a proton gradient across the membrane which is generated by electron transport complexes of the respiratory chain. ATP synthase complex consist of a soluble F(1) head domain - the catalytic core - and a membrane F(1) domain - the membrane proton channel. These two domains are linked by a central stalk rotating inside the F(1) region and a stationary peripheral stalk. During catalysis, ATP synthesis in the catalytic domain of F(1) is coupled via a rotary mechanism of the central stalk subunits to proton translocation. In vivo, can only synthesize ATP although its ATP hydrolase activity can be activated artificially in vitro. Part of the complex F(0) domain. This Tetraodon nigroviridis (Spotted green pufferfish) protein is ATP synthase F(0) complex subunit 8.